The primary structure comprises 142 residues: MAAMTVQLDIVSAESRIYSGLVAHLQVTGSEGDLGVMPGHAPLLTHIKPGMARIVKQDGSEEVFYLSGGILEVQPFSVSVLADVVLRADEIDEQAAVEAKRRAETALADAGADFNYAAAAIELAQAIAQLRVVETIKKNIAR.

The protein belongs to the ATPase epsilon chain family. In terms of assembly, F-type ATPases have 2 components, CF(1) - the catalytic core - and CF(0) - the membrane proton channel. CF(1) has five subunits: alpha(3), beta(3), gamma(1), delta(1), epsilon(1). CF(0) has three main subunits: a, b and c.

The protein resides in the cell inner membrane. Produces ATP from ADP in the presence of a proton gradient across the membrane. In Shewanella sediminis (strain HAW-EB3), this protein is ATP synthase epsilon chain.